Reading from the N-terminus, the 319-residue chain is Replication factor C small subunit 2 (319 aa).

44 to 51 (GPPGTGKT) is an ATP binding site.

This sequence belongs to the activator 1 small subunits family. RfcS subfamily. In terms of assembly, heteromultimer composed of small subunits (RfcS) and large subunits (RfcL).

Part of the RFC clamp loader complex which loads the PCNA sliding clamp onto DNA. The chain is Replication factor C small subunit 2 from Pyrobaculum aerophilum (strain ATCC 51768 / DSM 7523 / JCM 9630 / CIP 104966 / NBRC 100827 / IM2).